We begin with the raw amino-acid sequence, 435 residues long: Homoserine dehydrogenase (435 aa).

Positions 13, 14, 43, and 105 each coordinate NADPH. Val-14 serves as a coordination point for NAD(+). Residues Val-14, Arg-43, and Lys-105 each coordinate NADP(+). Na(+) contacts are provided by Glu-129, Val-132, Gly-134, and Ile-136. Lys-204 functions as the Proton donor in the catalytic mechanism. 2 disordered regions span residues 255 to 274 (ARGV…TPDR) and 377 to 402 (RCDD…PDHV). 2 stretches are compositionally biased toward basic and acidic residues: residues 262–274 (RAPD…TPDR) and 377–391 (RCDD…AERR).

Belongs to the homoserine dehydrogenase family. Requires a metal cation as cofactor.

It catalyses the reaction L-homoserine + NADP(+) = L-aspartate 4-semialdehyde + NADPH + H(+). The enzyme catalyses L-homoserine + NAD(+) = L-aspartate 4-semialdehyde + NADH + H(+). Its pathway is amino-acid biosynthesis; L-methionine biosynthesis via de novo pathway; L-homoserine from L-aspartate: step 3/3. It functions in the pathway amino-acid biosynthesis; L-threonine biosynthesis; L-threonine from L-aspartate: step 3/5. Catalyzes the conversion of L-aspartate-beta-semialdehyde (L-Asa) to L-homoserine (L-Hse), the third step in the biosynthesis of threonine and methionine from aspartate. The chain is Homoserine dehydrogenase (hom) from Methylobacillus glycogenes.